The chain runs to 383 residues: tRNA-specific 2-thiouridylase MnmA (383 aa).

ATP contacts are provided by residues 29-36 (GMSGGVDS) and Met-55. Positions 115 to 117 (NPD) are interaction with target base in tRNA. The active-site Nucleophile is the Cys-120. An intrachain disulfide couples Cys-120 to Cys-217. Gly-145 is an ATP binding site. Residues 167 to 169 (KDQ) are interaction with tRNA. Cys-217 acts as the Cysteine persulfide intermediate in catalysis. The interaction with tRNA stretch occupies residues 329–330 (RY).

This sequence belongs to the MnmA/TRMU family.

The protein resides in the cytoplasm. It carries out the reaction S-sulfanyl-L-cysteinyl-[protein] + uridine(34) in tRNA + AH2 + ATP = 2-thiouridine(34) in tRNA + L-cysteinyl-[protein] + A + AMP + diphosphate + H(+). Catalyzes the 2-thiolation of uridine at the wobble position (U34) of tRNA, leading to the formation of s(2)U34. The polypeptide is tRNA-specific 2-thiouridylase MnmA (Pasteurella multocida (strain Pm70)).